The primary structure comprises 365 residues: MSRPVPNPGILDIAPYTPGKSPAPEAGRKVFKLSANETPFGPSPKAMDAYRDAVAHLEDYPEGTSRVLRAAIGRAYGLDPDRIICGAGSDEILNLLAHTFLSHGDEAISTTHAFLVYPIATMANGATNIVAPETGYTADIDAILERVTPKTKMVWLANPNNPTGTYLPFDEIRRLRAGLPPHVLLVLDGAYSDYVSRNDYEFGIELVATTENTVLTHTFSKIHGLAALRIGWMFGPAHIVDAMNRIRGPFNVSTPAMLAAAAAIEDTAHVQMTRMHTEKWRSWLTDELTNLGLKVTPSVTNFILIHFPDARGRTASEADAFLTRRGLVLRALDNYCLPNALRMTIGTEEANRLVADGLRDFMART.

The interval 1–22 is disordered; the sequence is MSRPVPNPGILDIAPYTPGKSP. K221 is modified (N6-(pyridoxal phosphate)lysine).

It belongs to the class-II pyridoxal-phosphate-dependent aminotransferase family. Histidinol-phosphate aminotransferase subfamily. As to quaternary structure, homodimer. Requires pyridoxal 5'-phosphate as cofactor.

The catalysed reaction is L-histidinol phosphate + 2-oxoglutarate = 3-(imidazol-4-yl)-2-oxopropyl phosphate + L-glutamate. The protein operates within amino-acid biosynthesis; L-histidine biosynthesis; L-histidine from 5-phospho-alpha-D-ribose 1-diphosphate: step 7/9. This Nitrobacter winogradskyi (strain ATCC 25391 / DSM 10237 / CIP 104748 / NCIMB 11846 / Nb-255) protein is Histidinol-phosphate aminotransferase.